The following is a 477-amino-acid chain: Pyruvate kinase (477 aa).

Substrate is bound at residue Arg-34. The K(+) site is built by Asn-36, Asp-64, and Thr-65. Residue 36 to 39 (NTAH) participates in ATP binding. Residues Arg-71 and Lys-150 each coordinate ATP. Mg(2+) is bound at residue Glu-216. Gly-239, Asp-240, and Thr-272 together coordinate substrate. Mg(2+) is bound at residue Asp-240.

This sequence belongs to the pyruvate kinase family. Homotetramer. It depends on Mg(2+) as a cofactor. Requires K(+) as cofactor.

The catalysed reaction is pyruvate + ATP = phosphoenolpyruvate + ADP + H(+). The protein operates within carbohydrate degradation; glycolysis; pyruvate from D-glyceraldehyde 3-phosphate: step 5/5. The chain is Pyruvate kinase (pyk) from Borreliella burgdorferi (strain ATCC 35210 / DSM 4680 / CIP 102532 / B31) (Borrelia burgdorferi).